We begin with the raw amino-acid sequence, 225 residues long: Uridylate kinase (225 aa).

9-10 is an ATP binding site; sequence GS. Gly-44 lines the UMP pocket. ATP is bound by residues Gly-45 and Arg-49. UMP is bound by residues Asp-66 and 114–120; that span reads THPGHTT. The ATP site is built by Thr-140, Asn-141, Tyr-146, and Asp-149.

The protein belongs to the UMP kinase family. As to quaternary structure, homohexamer.

The protein localises to the cytoplasm. The catalysed reaction is UMP + ATP = UDP + ADP. The protein operates within pyrimidine metabolism; CTP biosynthesis via de novo pathway; UDP from UMP (UMPK route): step 1/1. Inhibited by UTP. Its function is as follows. Catalyzes the reversible phosphorylation of UMP to UDP. This is Uridylate kinase from Pyrococcus abyssi (strain GE5 / Orsay).